The sequence spans 209 residues: tRNA (guanine-N(7)-)-methyltransferase (209 aa).

Asp35, Glu60, Asn87, and Asp113 together coordinate S-adenosyl-L-methionine. Asp113 is a catalytic residue. The substrate site is built by Lys117 and Asp149.

It belongs to the class I-like SAM-binding methyltransferase superfamily. TrmB family.

It catalyses the reaction guanosine(46) in tRNA + S-adenosyl-L-methionine = N(7)-methylguanosine(46) in tRNA + S-adenosyl-L-homocysteine. The protein operates within tRNA modification; N(7)-methylguanine-tRNA biosynthesis. Catalyzes the formation of N(7)-methylguanine at position 46 (m7G46) in tRNA. In Prochlorococcus marinus (strain MIT 9515), this protein is tRNA (guanine-N(7)-)-methyltransferase.